Consider the following 637-residue polypeptide: Transmembrane 9 superfamily member 10 (637 aa).

The first 23 residues, 1 to 23 (MAKVRILIFTLVLFFSLNVHIHG), serve as a signal peptide directing secretion. At 24–274 (FYLPGVAPQD…YLLMADDQIH (251 aa)) the chain is on the lumenal side. Residues 275–295 (WFSIVNSMMIVLFLSGMVAMI) traverse the membrane as a helical segment. At 296–344 (MLRTLYRDISNYNQLESHEEALEETGWKLVHGDVFRPPTNPELLCVYAG) the chain is on the cytoplasmic side. The helical transmembrane segment at 345-365 (TGVQCFGMILVTMIFACLGFL) threads the bilayer. The Lumenal segment spans residues 366 to 370 (SPSNR). A helical transmembrane segment spans residues 371 to 391 (GGLMTAMLLLWVFMGLLAGYA). Residues 392–411 (SSRLYKTLRGTEWKRNALKT) are Cytoplasmic-facing. A helical membrane pass occupies residues 412-432 (AFMFPATVFVAFFVLNAIIWG). The Lumenal segment spans residues 433–444 (QKSSGAVPFGTM). The chain crosses the membrane as a helical span at residues 445–465 (FALVVLWFGISVPLVFIGGYI). Residues 466 to 494 (GFRKPAPEDPVKTNKIPRQIPTQAWYMNP) lie on the Cytoplasmic side of the membrane. Residues 495 to 515 (IFSILIGGILPFGAVFIELFF) traverse the membrane as a helical segment. Residues 516-527 (ILTSIWLHQFYY) lie on the Lumenal side of the membrane. A helical transmembrane segment spans residues 528 to 548 (IFGFLFIVFIILIITCAEITV). The Cytoplasmic portion of the chain corresponds to 549–566 (VLCYFQLCSEDYQWWWRS). A helical transmembrane segment spans residues 567–587 (YLTSGSSAVYLFLYAVFYFYT). At 588 to 593 (KLEITK) the chain is on the lumenal side. A helical transmembrane segment spans residues 594-614 (LVSAVLYFGYMLIVSYVFFVF). The Cytoplasmic segment spans residues 615 to 637 (TGAIGFYACFWFTRLIYSSVKID). Positions 626 to 631 (FTRLIY) match the Endoplasmic reticulum export signal motif. The short motif at 635-637 (KID) is the Golgi retention signal element.

This sequence belongs to the nonaspanin (TM9SF) (TC 9.A.2) family.

It is found in the endosome membrane. The protein resides in the golgi apparatus membrane. The protein is Transmembrane 9 superfamily member 10 of Arabidopsis thaliana (Mouse-ear cress).